The sequence spans 490 residues: Betaine aldehyde dehydrogenase (490 aa).

Residues Lys174, Glu177, and 227 to 232 each bind NAD(+); that span reads GGIETG. Residues Glu249 and Cys283 contribute to the active site. Glu384 provides a ligand contact to NAD(+).

This sequence belongs to the aldehyde dehydrogenase family. Homodimer.

It carries out the reaction betaine aldehyde + NAD(+) + H2O = glycine betaine + NADH + 2 H(+). Its pathway is amine and polyamine biosynthesis; betaine biosynthesis via choline pathway; betaine from betaine aldehyde: step 1/1. Its activity is regulated as follows. Activity is stimulated by low concentrations of salts and by moderate concentrations of glycine betaine. Highly tolerant to high ionic conditions. In vitro, activity is highly stimulated in the presence of proline. Involved in the biosynthesis of the osmoprotectant glycine betaine from choline. Catalyzes the oxidation of betaine aldehyde to betaine. Shows specificity for betaine aldehyde as substrate. Can use both NAD(+) and NADP(+), but NAD(+) is strongly preferred. This Bacillus subtilis (strain 168) protein is Betaine aldehyde dehydrogenase.